A 286-amino-acid chain; its full sequence is Polyamine aminopropyltransferase (286 aa).

A PABS domain is found at 5–238 (PLWHETLHDH…GIMTFAWASD (234 aa)). Gln33 contributes to the S-methyl-5'-thioadenosine binding site. Spermidine-binding residues include His64 and Asp88. Residues Glu108 and 140 to 141 (DG) contribute to the S-methyl-5'-thioadenosine site. Catalysis depends on Asp158, which acts as the Proton acceptor. Spermidine is bound at residue 158–161 (DCTD). Pro165 contributes to the S-methyl-5'-thioadenosine binding site.

This sequence belongs to the spermidine/spermine synthase family. In terms of assembly, homodimer or homotetramer.

The protein resides in the cytoplasm. The catalysed reaction is S-adenosyl 3-(methylsulfanyl)propylamine + putrescine = S-methyl-5'-thioadenosine + spermidine + H(+). Its pathway is amine and polyamine biosynthesis; spermidine biosynthesis; spermidine from putrescine: step 1/1. Functionally, catalyzes the irreversible transfer of a propylamine group from the amino donor S-adenosylmethioninamine (decarboxy-AdoMet) to putrescine (1,4-diaminobutane) to yield spermidine. The polypeptide is Polyamine aminopropyltransferase (Klebsiella pneumoniae subsp. pneumoniae (strain ATCC 700721 / MGH 78578)).